A 153-amino-acid polypeptide reads, in one-letter code: Pheromone-binding protein Gp-9 (153 aa).

Residues 1–19 (MKTFVLHIFIFALVAFASA) form the signal peptide. 3 disulfide bridges follow: Cys37–Cys77, Cys73–Cys129, and Cys118–Cys138.

It belongs to the PBP/GOBP family. As to quaternary structure, homodimer.

It localises to the secreted. Its function is as follows. Colony queen number, a major feature of social organization, is associated with worker genotype for Gp-9. Colonies are headed by either a single reproductive queen (monogyne form) or multiple queens (polygyne form). Differences in worker Gp-9 genotypes between social forms may cause differences in workers' abilities to recognize queens and regulate their numbers. In Solenopsis invicta (Red imported fire ant), this protein is Pheromone-binding protein Gp-9.